A 442-amino-acid polypeptide reads, in one-letter code: tRNA modification GTPase MnmE (442 aa).

The (6S)-5-formyl-5,6,7,8-tetrahydrofolate site is built by R27, E84, and K124. Positions 221-366 constitute a TrmE-type G domain; that stretch reads GLHVVIVGAP…LLDALQAFAE (146 aa). Residues 231–236, 250–256, and 275–278 contribute to the GTP site; these read NAGKSS, SEEAGTT, and DTAG. S235 and T256 together coordinate Mg(2+). K442 serves as a coordination point for (6S)-5-formyl-5,6,7,8-tetrahydrofolate.

This sequence belongs to the TRAFAC class TrmE-Era-EngA-EngB-Septin-like GTPase superfamily. TrmE GTPase family. In terms of assembly, homodimer. Heterotetramer of two MnmE and two MnmG subunits. Requires K(+) as cofactor.

It localises to the cytoplasm. Exhibits a very high intrinsic GTPase hydrolysis rate. Involved in the addition of a carboxymethylaminomethyl (cmnm) group at the wobble position (U34) of certain tRNAs, forming tRNA-cmnm(5)s(2)U34. This is tRNA modification GTPase MnmE from Brucella suis (strain ATCC 23445 / NCTC 10510).